A 479-amino-acid chain; its full sequence is Aldehyde dehydrogenase family 3 member B2 (479 aa).

Catalysis depends on residues E223 and C257. C476 is subject to Cysteine methyl ester. C476 carries the S-geranylgeranyl cysteine lipid modification. Residues 477-479 (TLL) constitute a propeptide, removed in mature form.

It belongs to the aldehyde dehydrogenase family. In terms of processing, geranylgeranylation is important for localization to lipid droplets and enzyme activity. As to expression, expressed in testis, white adipose tissue, lung, small intestine, kidney, spleen and liver.

The protein localises to the lipid droplet. The enzyme catalyses an aldehyde + NAD(+) + H2O = a carboxylate + NADH + 2 H(+). It carries out the reaction a long-chain fatty aldehyde + NAD(+) + H2O = a long-chain fatty acid + NADH + 2 H(+). It catalyses the reaction a medium-chain fatty aldehyde + NAD(+) + H2O = a medium-chain fatty acid + NADH + 2 H(+). The catalysed reaction is hexadecanoate + NADH + 2 H(+) = hexadecanal + NAD(+) + H2O. The enzyme catalyses octanal + NAD(+) + H2O = octanoate + NADH + 2 H(+). The protein operates within alcohol metabolism; ethanol degradation; acetate from ethanol: step 2/2. Oxidizes medium and long chain fatty aldehydes in lipid droplets into non-toxic fatty acids. The polypeptide is Aldehyde dehydrogenase family 3 member B2 (Mus musculus (Mouse)).